The chain runs to 1368 residues: DNA-directed RNA polymerase subunit beta (1368 aa).

This sequence belongs to the RNA polymerase beta chain family. As to quaternary structure, the RNAP catalytic core consists of 2 alpha, 1 beta, 1 beta' and 1 omega subunit. When a sigma factor is associated with the core the holoenzyme is formed, which can initiate transcription.

The catalysed reaction is RNA(n) + a ribonucleoside 5'-triphosphate = RNA(n+1) + diphosphate. Functionally, DNA-dependent RNA polymerase catalyzes the transcription of DNA into RNA using the four ribonucleoside triphosphates as substrates. In Desulfosudis oleivorans (strain DSM 6200 / JCM 39069 / Hxd3) (Desulfococcus oleovorans), this protein is DNA-directed RNA polymerase subunit beta.